A 228-amino-acid chain; its full sequence is NAD(P)H-hydrate epimerase (228 aa).

In terms of domain architecture, YjeF N-terminal spans 9–209 (VRAVERLAHR…LLGLTPAFLA (201 aa)). 53–57 (NNGGD) serves as a coordination point for (6S)-NADPHX. K(+) is bound by residues Asn-54 and Asp-115. (6S)-NADPHX contacts are provided by residues 119–125 (GIGLARP) and Asp-148. Ser-151 serves as a coordination point for K(+).

The protein belongs to the NnrE/AIBP family. K(+) serves as cofactor.

The enzyme catalyses (6R)-NADHX = (6S)-NADHX. It catalyses the reaction (6R)-NADPHX = (6S)-NADPHX. Functionally, catalyzes the epimerization of the S- and R-forms of NAD(P)HX, a damaged form of NAD(P)H that is a result of enzymatic or heat-dependent hydration. This is a prerequisite for the S-specific NAD(P)H-hydrate dehydratase to allow the repair of both epimers of NAD(P)HX. In Bordetella bronchiseptica (strain ATCC BAA-588 / NCTC 13252 / RB50) (Alcaligenes bronchisepticus), this protein is NAD(P)H-hydrate epimerase.